A 20-amino-acid polypeptide reads, in one-letter code: Putative beta-neurotoxin (20 aa).

The 20-residue stretch at 1–20 (KDGYLVGSDGCKYSCLTRPG) folds into the LCN-type CS-alpha/beta domain.

As to expression, expressed by the venom gland.

It is found in the secreted. Its function is as follows. Beta toxins bind voltage-independently at site-4 of sodium channels (Nav) and shift the voltage of activation toward more negative potentials thereby affecting sodium channel activation and promoting spontaneous and repetitive firing. This is Putative beta-neurotoxin from Tityus pachyurus (Colombian scorpion).